The sequence spans 446 residues: Phosphoglucosamine mutase (446 aa).

Ser102 (phosphoserine intermediate) is an active-site residue. Mg(2+)-binding residues include Ser102, Asp239, Asp241, and Asp243. Ser102 is modified (phosphoserine).

The protein belongs to the phosphohexose mutase family. It depends on Mg(2+) as a cofactor. Post-translationally, activated by phosphorylation.

It catalyses the reaction alpha-D-glucosamine 1-phosphate = D-glucosamine 6-phosphate. Functionally, catalyzes the conversion of glucosamine-6-phosphate to glucosamine-1-phosphate. This chain is Phosphoglucosamine mutase, found in Solibacter usitatus (strain Ellin6076).